The chain runs to 196 residues: uncharacterized protein (196 aa).

The segment at 44-80 (RSVAVPGTEGKKAQNLRQLPAARLTYPTSSSTRPSHA) is disordered.

This is an uncharacterized protein from Treponema pallidum (strain Nichols).